The following is an 81-amino-acid chain: ATP synthase subunit c, chloroplastic (81 aa).

The next 2 helical transmembrane spans lie at 3–23 (PLIS…ASIG) and 53–73 (LLLS…VALA).

Belongs to the ATPase C chain family. In terms of assembly, F-type ATPases have 2 components, F(1) - the catalytic core - and F(0) - the membrane proton channel. F(1) has five subunits: alpha(3), beta(3), gamma(1), delta(1), epsilon(1). F(0) has four main subunits: a(1), b(1), b'(1) and c(10-14). The alpha and beta chains form an alternating ring which encloses part of the gamma chain. F(1) is attached to F(0) by a central stalk formed by the gamma and epsilon chains, while a peripheral stalk is formed by the delta, b and b' chains.

Its subcellular location is the plastid. It localises to the chloroplast thylakoid membrane. F(1)F(0) ATP synthase produces ATP from ADP in the presence of a proton or sodium gradient. F-type ATPases consist of two structural domains, F(1) containing the extramembraneous catalytic core and F(0) containing the membrane proton channel, linked together by a central stalk and a peripheral stalk. During catalysis, ATP synthesis in the catalytic domain of F(1) is coupled via a rotary mechanism of the central stalk subunits to proton translocation. Its function is as follows. Key component of the F(0) channel; it plays a direct role in translocation across the membrane. A homomeric c-ring of between 10-14 subunits forms the central stalk rotor element with the F(1) delta and epsilon subunits. The protein is ATP synthase subunit c, chloroplastic of Huperzia lucidula (Shining clubmoss).